A 131-amino-acid chain; its full sequence is uncharacterized protein (131 aa).

The region spanning 1 to 116 is the CMP/dCMP-type deaminase domain; that stretch reads MYMARMLSEM…EMLEASSIQC (116 aa).

This is an uncharacterized protein from Caenorhabditis elegans.